A 254-amino-acid polypeptide reads, in one-letter code: Imidazole glycerol phosphate synthase subunit HisF (254 aa).

Catalysis depends on residues Asp-12 and Asp-131.

This sequence belongs to the HisA/HisF family. In terms of assembly, heterodimer of HisH and HisF.

It localises to the cytoplasm. It catalyses the reaction 5-[(5-phospho-1-deoxy-D-ribulos-1-ylimino)methylamino]-1-(5-phospho-beta-D-ribosyl)imidazole-4-carboxamide + L-glutamine = D-erythro-1-(imidazol-4-yl)glycerol 3-phosphate + 5-amino-1-(5-phospho-beta-D-ribosyl)imidazole-4-carboxamide + L-glutamate + H(+). It functions in the pathway amino-acid biosynthesis; L-histidine biosynthesis; L-histidine from 5-phospho-alpha-D-ribose 1-diphosphate: step 5/9. Functionally, IGPS catalyzes the conversion of PRFAR and glutamine to IGP, AICAR and glutamate. The HisF subunit catalyzes the cyclization activity that produces IGP and AICAR from PRFAR using the ammonia provided by the HisH subunit. The chain is Imidazole glycerol phosphate synthase subunit HisF from Frankia casuarinae (strain DSM 45818 / CECT 9043 / HFP020203 / CcI3).